The following is a 117-amino-acid chain: Large ribosomal subunit protein uL18 (117 aa).

This sequence belongs to the universal ribosomal protein uL18 family. Part of the 50S ribosomal subunit; part of the 5S rRNA/L5/L18/L25 subcomplex. Contacts the 5S and 23S rRNAs.

In terms of biological role, this is one of the proteins that bind and probably mediate the attachment of the 5S RNA into the large ribosomal subunit, where it forms part of the central protuberance. This chain is Large ribosomal subunit protein uL18, found in Coxiella burnetii (strain CbuK_Q154) (Coxiella burnetii (strain Q154)).